Consider the following 245-residue polypeptide: Eukaryotic translation initiation factor 4E type 2 (245 aa).

The span at 1–38 (MNNKFDALKDDDSGDHDQNEENSTQKDGEKEKTERDKN) shows a compositional bias: basic and acidic residues. Residues 1–52 (MNNKFDALKDDDSGDHDQNEENSTQKDGEKEKTERDKNQSSSKRKAVVPGPA) are disordered. S13 carries the phosphoserine modification. The EIF4EBP1/2/3 binding stretch occupies residues 54-57 (HPLQ). 78–79 (YE) provides a ligand contact to mRNA. The interval 95–99 (WRFYS) is EIF4EBP1/2/3 binding. Residues H110 and 124 to 125 (WE) contribute to the mRNA site. K134 bears the N6-acetyllysine; alternate mark. K134 participates in a covalent cross-link: Glycyl lysine isopeptide (Lys-Gly) (interchain with G-Cter in ISG15); alternate. An EIF4EBP1/2/3 binding region spans residues 150-157 (NLILAMLG). MRNA is bound by residues 174–179 (RFQEDI) and 222–224 (KMP). K222 participates in a covalent cross-link: Glycyl lysine isopeptide (Lys-Gly) (interchain with G-Cter in ISG15).

The protein belongs to the eukaryotic initiation factor 4E family. In terms of assembly, interacts with EIF4EBP1, EIF4EBP2 and EIF4EBP3. Does not interact with eIF4G (EIF4G1, EIF4G2 or EIF4G3). Component of the 4EHP-GYF2 complex, at least composed of EIF4E2, GIGYF2 and ZNF598. Interacts with GIGYF2 (via the 4EHP-binding motif); the interaction is direct. Interacts with EIF4ENIF1/4E-T (via YXXXXLphi motif); increasing affinity for the 7-methylguanosine-containing mRNA cap. Ubiquitinated by ARIH1. The consequences of ubiquitination are however unclear: according to a report, EIF4E2 ubiquitination leads to promote EIF4E2 cap-binding and protein translation arrest. According to another report ubiquitination leads to its subsequent degradation. Post-translationally, ISGylation enhances its cap structure-binding activity and translation-inhibition activity.

It is found in the cytoplasm. It localises to the P-body. Recognizes and binds the 7-methylguanosine-containing mRNA cap during an early step in the initiation. Acts as a repressor of translation initiation. In contrast to EIF4E, it is unable to bind eIF4G (EIF4G1, EIF4G2 or EIF4G3), suggesting that it acts by competing with EIF4E and block assembly of eIF4F at the cap. In P-bodies, component of a complex that promotes miRNA-mediated translational repression. Involved in virus-induced host response by mediating miRNA MIR34A-induced translational silencing which controls IFNB1 production by a negative feedback mechanism. Functionally, component of the 4EHP-GYF2 complex, a multiprotein complex that acts as a repressor of translation initiation. In association with GIGYF2, assists ribosome-associated quality control (RQC) by sequestering the mRNA cap, blocking ribosome initiation and decreasing the translational load on problematic messages. Part of a pathway that works in parallel to RQC-mediated degradation of the stalled nascent polypeptide. GIGYF2 and EIF4E2 work downstream and independently of ZNF598, which seems to work as a scaffold that can recruit them to faulty mRNA even if alternative recruitment mechanisms may exist. In terms of biological role, (Microbial infection) Upon SARS coronavirus-2/SARS-CoV-2 infection, the interaction with non-structural protein 2 (nsp2) with GIGYF2 enhances GIGYF2 binding to EIF4E2 and increases repression of translation initiation of genes involved in antiviral innate immune response such as IFNB1. The chain is Eukaryotic translation initiation factor 4E type 2 from Homo sapiens (Human).